Consider the following 232-residue polypeptide: 5'-methylthioadenosine/S-adenosylhomocysteine nucleosidase (232 aa).

Glu12 functions as the Proton acceptor in the catalytic mechanism. Substrate is bound by residues Gly78, Val152, and 173–174; that span reads ME. Asp197 acts as the Proton donor in catalysis.

This sequence belongs to the PNP/UDP phosphorylase family. MtnN subfamily. In terms of assembly, homodimer.

The enzyme catalyses S-adenosyl-L-homocysteine + H2O = S-(5-deoxy-D-ribos-5-yl)-L-homocysteine + adenine. It carries out the reaction S-methyl-5'-thioadenosine + H2O = 5-(methylsulfanyl)-D-ribose + adenine. The catalysed reaction is 5'-deoxyadenosine + H2O = 5-deoxy-D-ribose + adenine. It participates in amino-acid biosynthesis; L-methionine biosynthesis via salvage pathway; S-methyl-5-thio-alpha-D-ribose 1-phosphate from S-methyl-5'-thioadenosine (hydrolase route): step 1/2. In terms of biological role, catalyzes the irreversible cleavage of the glycosidic bond in both 5'-methylthioadenosine (MTA) and S-adenosylhomocysteine (SAH/AdoHcy) to adenine and the corresponding thioribose, 5'-methylthioribose and S-ribosylhomocysteine, respectively. Also cleaves 5'-deoxyadenosine, a toxic by-product of radical S-adenosylmethionine (SAM) enzymes, into 5-deoxyribose and adenine. Thus, is required for in vivo function of the radical SAM enzymes biotin synthase and lipoic acid synthase, that are inhibited by 5'-deoxyadenosine accumulation. This is 5'-methylthioadenosine/S-adenosylhomocysteine nucleosidase from Buchnera aphidicola subsp. Acyrthosiphon pisum (strain 5A).